A 465-amino-acid polypeptide reads, in one-letter code: Ribulose bisphosphate carboxylase large chain (465 aa).

Lys-4 carries the post-translational modification N6,N6,N6-trimethyllysine. Residues Asn-113 and Thr-163 each contribute to the substrate site. Catalysis depends on Lys-165, which acts as the Proton acceptor. Lys-167 is a substrate binding site. The Mg(2+) site is built by Lys-191, Asp-193, and Glu-194. Lys-191 carries the post-translational modification N6-carboxylysine. Catalysis depends on His-284, which acts as the Proton acceptor. 3 residues coordinate substrate: Arg-285, His-317, and Ser-369.

It belongs to the RuBisCO large chain family. Type I subfamily. As to quaternary structure, heterohexadecamer of 8 large chains and 8 small chains. Mg(2+) serves as cofactor.

Its subcellular location is the plastid. The protein resides in the chloroplast. The enzyme catalyses 2 (2R)-3-phosphoglycerate + 2 H(+) = D-ribulose 1,5-bisphosphate + CO2 + H2O. The catalysed reaction is D-ribulose 1,5-bisphosphate + O2 = 2-phosphoglycolate + (2R)-3-phosphoglycerate + 2 H(+). In terms of biological role, ruBisCO catalyzes two reactions: the carboxylation of D-ribulose 1,5-bisphosphate, the primary event in carbon dioxide fixation, as well as the oxidative fragmentation of the pentose substrate in the photorespiration process. Both reactions occur simultaneously and in competition at the same active site. The polypeptide is Ribulose bisphosphate carboxylase large chain (Sarracenia flava (Yellow pitcher plant)).